The primary structure comprises 388 residues: Peptide chain release factor subunit 1 (388 aa).

This sequence belongs to the eukaryotic release factor 1 family. Heterodimer of two subunits, one of which binds GTP.

The protein localises to the cytoplasm. Directs the termination of nascent peptide synthesis (translation) in response to the termination codons UAA, UAG and UGA. The chain is Peptide chain release factor subunit 1 (prf1) from Pyrobaculum aerophilum (strain ATCC 51768 / DSM 7523 / JCM 9630 / CIP 104966 / NBRC 100827 / IM2).